An 89-amino-acid polypeptide reads, in one-letter code: MKPGIHPDYRTVLFHDTAADVYFLIGSTVDTDRSHTYSDGKTYPYVALDVSSASHPVYTGQQRKTQSEGRIAGFNKRFASFGSGAKAAQ.

Belongs to the bacterial ribosomal protein bL31 family. Type B subfamily. As to quaternary structure, part of the 50S ribosomal subunit.

In Pseudomonas fluorescens (strain ATCC BAA-477 / NRRL B-23932 / Pf-5), this protein is Large ribosomal subunit protein bL31B.